A 96-amino-acid chain; its full sequence is Large ribosomal subunit protein bL27 (96 aa).

The propeptide occupies 1–9; sequence MLRLDLQFF.

This sequence belongs to the bacterial ribosomal protein bL27 family. In terms of processing, the N-terminus is cleaved by ribosomal processing cysteine protease Prp.

This is Large ribosomal subunit protein bL27 from Anoxybacillus flavithermus (strain DSM 21510 / WK1).